The chain runs to 509 residues: Protein MAIN-LIKE 1 (509 aa).

The disordered stretch occupies residues 477–509 (GYGKRRRRNEHTPTPNNGGGNDISSLLLQKEDS). The span at 488-503 (TPTPNNGGGNDISSLL) shows a compositional bias: polar residues.

In terms of tissue distribution, expressed in root tips, the shoot apical meristem (SAM), leaves, mature flowers and embryos.

The protein resides in the nucleus. Its function is as follows. Acts as an important factor for cell fate determination and maintenance throughout plant development. Required for the organization of the root apical meristem (RAM) and the shoot apical meristem (SAM). Required to maintain genome stability and cell division activity in meristematic cells. This chain is Protein MAIN-LIKE 1, found in Arabidopsis thaliana (Mouse-ear cress).